A 227-amino-acid polypeptide reads, in one-letter code: Pyridoxal 5'-phosphate synthase subunit PdxT (227 aa).

L-glutamine is bound at residue 52 to 54 (GES). The Nucleophile role is filled by C84. Residues R118 and 149-150 (IR) contribute to the L-glutamine site. Active-site charge relay system residues include H189 and E191.

It belongs to the glutaminase PdxT/SNO family. In terms of assembly, in the presence of PdxS, forms a dodecamer of heterodimers. Only shows activity in the heterodimer.

The enzyme catalyses aldehydo-D-ribose 5-phosphate + D-glyceraldehyde 3-phosphate + L-glutamine = pyridoxal 5'-phosphate + L-glutamate + phosphate + 3 H2O + H(+). The catalysed reaction is L-glutamine + H2O = L-glutamate + NH4(+). The protein operates within cofactor biosynthesis; pyridoxal 5'-phosphate biosynthesis. In terms of biological role, catalyzes the hydrolysis of glutamine to glutamate and ammonia as part of the biosynthesis of pyridoxal 5'-phosphate. The resulting ammonia molecule is channeled to the active site of PdxS. In Renibacterium salmoninarum (strain ATCC 33209 / DSM 20767 / JCM 11484 / NBRC 15589 / NCIMB 2235), this protein is Pyridoxal 5'-phosphate synthase subunit PdxT.